The following is a 361-amino-acid chain: Myricetin 3-O-methyltransferase 3 (361 aa).

Position 229 (D229) interacts with S-adenosyl-L-methionine. H267 acts as the Proton acceptor in catalysis.

The protein belongs to the class I-like SAM-binding methyltransferase superfamily. Cation-independent O-methyltransferase family. Homodimer. As to expression, mainly expressed in leaves secreting glandular trichomes types 1 and 4 and, to a lesser extent, in storage trichomes type 6.

The enzyme catalyses kaempferol + S-adenosyl-L-methionine = 3-O-methylkaempferol + S-adenosyl-L-homocysteine + H(+). It catalyses the reaction quercetin + S-adenosyl-L-methionine = 3',4',5,7-tetrahydroxy-3-methoxyflavone + S-adenosyl-L-homocysteine + H(+). The catalysed reaction is myricetin + S-adenosyl-L-methionine = 3-O-methylmyricetin + S-adenosyl-L-homocysteine + H(+). It carries out the reaction kaempferide + S-adenosyl-L-methionine = 3,4'-O-dimethylkaempferol + S-adenosyl-L-homocysteine + H(+). The enzyme catalyses isorhamnetin + S-adenosyl-L-methionine = 3,3'-O-dimethylquercetin + S-adenosyl-L-homocysteine + H(+). It catalyses the reaction rhamnetin + S-adenosyl-L-methionine = 3',4',5-trihydroxy-3,7-dimethoxyflavone + S-adenosyl-L-homocysteine + H(+). The catalysed reaction is laricitrin + S-adenosyl-L-methionine = 3,3'-O-dimethylmyricetin + S-adenosyl-L-homocysteine + H(+). It carries out the reaction syringetin + S-adenosyl-L-methionine = 3,3',5'-O-trimethylmyricetin + S-adenosyl-L-homocysteine + H(+). It participates in flavonoid metabolism. In terms of biological role, flavonoid 3-O-methyltransferase involved in the biosynthesis of polymethoxylated flavonoids natural products such as myricetin derivatives, aroma compounds possessing antioxidant properties and exhibiting pharmacological activities such as anti-carcinogen, anti-viral, anti-thrombotic, anti-diabetic, anti-atherosclerotic, and anti-inflammatory effects. Catalyzes S-adenosylmethionine-dependent regioselective 3-O-methylation of flavonoids; active on various hydroxylated flavonoid substrates. Active with myricetin, quercetin, kaempferol, 4'-methyl kaempferol (kaempferide), 3'-methyl quercetin (isorhamnetin), 7-methyl quercetin (rhamnetin), 3'-methyl myricetin (laricitrin) and 3',5'-dimethyl myricetin (syringetin), thus producing 3-methyl myricetin, 3-methyl quercetin, 3-methyl kaempferol, 4',3-methyl kaempferol, 3',3-methyl quercetin, 7,3-dimethyl quercetin, 3',3-dimethyl myricetin and 3',5',3-dimethyl myricetin, respectively. Inactive with flavonol substrates methylated at the 3-hydroxyl position such as 3-O-methyl quercetin. The chain is Myricetin 3-O-methyltransferase 3 from Solanum habrochaites (Wild tomato).